A 318-amino-acid chain; its full sequence is Methionyl-tRNA formyltransferase (318 aa).

112 to 115 (SILP) provides a ligand contact to (6S)-5,6,7,8-tetrahydrofolate.

It belongs to the Fmt family.

It catalyses the reaction L-methionyl-tRNA(fMet) + (6R)-10-formyltetrahydrofolate = N-formyl-L-methionyl-tRNA(fMet) + (6S)-5,6,7,8-tetrahydrofolate + H(+). Attaches a formyl group to the free amino group of methionyl-tRNA(fMet). The formyl group appears to play a dual role in the initiator identity of N-formylmethionyl-tRNA by promoting its recognition by IF2 and preventing the misappropriation of this tRNA by the elongation apparatus. This is Methionyl-tRNA formyltransferase from Shewanella baltica (strain OS195).